The primary structure comprises 520 residues: Ribonuclease Y (520 aa).

The chain crosses the membrane as a helical span at residues 4-24; sequence TVWILISILLATVGAVVGFFV. The KH domain occupies 210–273; sequence TVSVVNLPND…ETARIALDKL (64 aa). In terms of domain architecture, HD spans 336–429; the sequence is VLKHSMEVAY…VAAADALSAA (94 aa).

This sequence belongs to the RNase Y family.

It localises to the cell membrane. Endoribonuclease that initiates mRNA decay. The polypeptide is Ribonuclease Y (Bacillus cereus (strain ZK / E33L)).